The following is a 776-amino-acid chain: Venom dipeptidyl peptidase 4 (776 aa).

An N-terminal signal peptide occupies residues 1-25 (MVPLRSFVLLNSLFLVLLAARTVVT). Asn-44, Asn-66, and Asn-329 each carry an N-linked (GlcNAc...) asparagine glycan. 2 disulfide bridges follow: Cys-449/Cys-452 and Cys-462/Cys-480. Residues Asn-504 and Asn-577 are each glycosylated (N-linked (GlcNAc...) asparagine). Ser-638 (charge relay system) is an active-site residue. An intrachain disulfide couples Cys-658 to Cys-769. N-linked (GlcNAc...) asparagine glycosylation is found at Asn-688 and Asn-693. Active-site charge relay system residues include Asp-717 and His-749.

The protein belongs to the peptidase S9B family. DPPIV subfamily. In terms of tissue distribution, expressed by the venom gland.

It is found in the secreted. The enzyme catalyses Release of an N-terminal dipeptide, Xaa-Yaa-|-Zaa-, from a polypeptide, preferentially when Yaa is Pro, provided Zaa is neither Pro nor hydroxyproline.. Inhibited by diprotin A. Its function is as follows. Venom dipeptidyl-peptidase which removes N-terminal dipeptides sequentially from polypeptides having unsubstituted N-termini provided that the penultimate residue is proline. May process venom proteins into their active forms and/or modulate the chemotactic activity of immune cells after the insect sting. In Vespula vulgaris (Yellow jacket), this protein is Venom dipeptidyl peptidase 4.